The sequence spans 176 residues: Dual-action ribosomal maturation protein DarP (176 aa).

Belongs to the DarP family.

The protein resides in the cytoplasm. Its function is as follows. Member of a network of 50S ribosomal subunit biogenesis factors which assembles along the 30S-50S interface, preventing incorrect 23S rRNA structures from forming. Promotes peptidyl transferase center (PTC) maturation. The chain is Dual-action ribosomal maturation protein DarP from Actinobacillus pleuropneumoniae serotype 5b (strain L20).